Consider the following 304-residue polypeptide: Protein pxr1 (304 aa).

The segment covering 1–11 (MGLAAPRKKTK) has biased composition (basic residues). Disordered stretches follow at residues 1-25 (MGLAAPRKKTKISHDPNNTSWSRST), 144-238 (NATA…DTET), and 256-276 (TSLLASNGPSTSRERQPMGRR). Residues 15–25 (DPNNTSWSRST) show a composition bias toward polar residues. Residues 25–79 (TDGFGHRILKAQGWTPGDFLGARNATHSDLFTTASASHIRVVLKDDTLGLGARPK) enclose the G-patch domain. Basic and acidic residues-rich tracts occupy residues 154 to 170 (LRVDFPRETSSNEHENG) and 204 to 238 (GKEMDMSPRKSREKKQEKIQKKRKIGDCDRLDTET). A compositionally biased stretch (polar residues) spans 256–266 (TSLLASNGPST).

The protein belongs to the PINX1 family.

Its subcellular location is the nucleus. The protein localises to the nucleolus. In terms of biological role, involved in rRNA-processing at A0, A1 and A2 sites and negatively regulates telomerase. This chain is Protein pxr1 (pxr1), found in Aspergillus fumigatus (strain ATCC MYA-4609 / CBS 101355 / FGSC A1100 / Af293) (Neosartorya fumigata).